The sequence spans 147 residues: Angiogenin (147 aa).

The first 24 residues, 1–24, serve as a signal peptide directing secretion; the sequence is MVMGLGVLLLVFVLGLGLTPPTLA. Residue glutamine 25 is modified to Pyrrolidone carboxylic acid. The Proton acceptor role is filled by histidine 37. Positions 45 and 46 each coordinate tRNA. Intrachain disulfides connect cysteine 50–cysteine 105, cysteine 63–cysteine 116, and cysteine 81–cysteine 131. Residues 55-59 carry the Nucleolar localization signal motif; that stretch reads RRRGL. Residues cysteine 105 and valine 127 each contribute to the tRNA site. Histidine 138 serves as the catalytic Proton donor.

Belongs to the pancreatic ribonuclease family. In terms of assembly, homodimer. Interacts with RNH1; inhibiting ANG ribonuclease activity. Interacts with PCNA.

Its subcellular location is the secreted. The protein localises to the nucleus. It is found in the nucleolus. The protein resides in the cytoplasm. It localises to the stress granule. Its activity is regulated as follows. Has weak tRNA ribonuclease activity by itself due to partial autoinhibition by its C-terminus, which folds into a short alpha-helix that partially occludes the substrate-binding site. In absence of stress, the ribonuclease activity is inhibited by RNH1 in the cytoplasm. In response to stress, dissociates from RNH1 in the cytoplasm and associates with cytoplasmic ribosomes with vacant A-sites: ribosomes directly activate the tRNA ribonuclease activity of ANG by refolding the C-terminal alpha-helix. In response to stress, the angiogenic activity of ANG is inhibited by RNH1 in the nucleus. Functionally, secreted ribonuclease that can either promote or restrict cell proliferation of target cells, depending on the context. Endocytosed in target cells via its receptor PLXNB2 and translocates to the cytoplasm or nucleus. Under stress conditions, localizes to the cytoplasm and promotes the assembly of stress granules (SGs): specifically cleaves a subset of tRNAs within anticodon loops to produce tRNA-derived stress-induced fragments (tiRNAs), resulting in translation repression and inhibition of cell proliferation. tiRNas also prevent formation of apoptosome, thereby promoting cell survival. Preferentially cleaves RNAs between a pyrimidine and an adenosine residue, suggesting that it cleaves the anticodon loop of tRNA(Ala) (32-UUAGCAU-38) after positions 33 and 36. Cleaves a subset of tRNAs, including tRNA(Ala), tRNA(Glu), tRNA(Gly), tRNA(Lys), tRNA(Val), tRNA(His), tRNA(Asp) and tRNA(Sec). Under growth conditions and in differentiated cells, translocates to the nucleus and stimulates ribosomal RNA (rRNA) transcription, including that containing the initiation site sequences of 45S rRNA, thereby promoting cell growth and proliferation. Angiogenin induces vascularization of normal and malignant tissues via its ability to promote rRNA transcription. Involved in hematopoietic stem and progenitor cell (HSPC) growth and survival by promoting rRNA transcription in growth conditions and inhibiting translation in response to stress, respectively. Mediates the crosstalk between myeloid and intestinal epithelial cells to protect the intestinal epithelial barrier integrity: secreted by myeloid cells and promotes intestinal epithelial cells proliferation and survival. Also mediates osteoclast-endothelial cell crosstalk in growing bone: produced by osteoclasts and protects the neighboring vascular cells against senescence by promoting rRNA transcription. The chain is Angiogenin (ANG) from Pan troglodytes (Chimpanzee).